Here is a 200-residue protein sequence, read N- to C-terminus: dITP/XTP pyrophosphatase (200 aa).

A substrate-binding site is contributed by 7-12; the sequence is TSNKHK. Mg(2+)-binding residues include glutamate 38 and aspartate 73. Catalysis depends on aspartate 73, which acts as the Proton acceptor. Residues serine 74, 154-157, lysine 177, and 182-183 each bind substrate; these read FGYD and HR.

This sequence belongs to the HAM1 NTPase family. In terms of assembly, homodimer. It depends on Mg(2+) as a cofactor.

It catalyses the reaction XTP + H2O = XMP + diphosphate + H(+). The enzyme catalyses dITP + H2O = dIMP + diphosphate + H(+). It carries out the reaction ITP + H2O = IMP + diphosphate + H(+). Functionally, pyrophosphatase that catalyzes the hydrolysis of nucleoside triphosphates to their monophosphate derivatives, with a high preference for the non-canonical purine nucleotides XTP (xanthosine triphosphate), dITP (deoxyinosine triphosphate) and ITP. Seems to function as a house-cleaning enzyme that removes non-canonical purine nucleotides from the nucleotide pool, thus preventing their incorporation into DNA/RNA and avoiding chromosomal lesions. This is dITP/XTP pyrophosphatase from Campylobacter jejuni subsp. doylei (strain ATCC BAA-1458 / RM4099 / 269.97).